We begin with the raw amino-acid sequence, 193 residues long: Xanthine phosphoribosyltransferase (193 aa).

The xanthine site is built by Leu-20 and Thr-27. 5-phospho-alpha-D-ribose 1-diphosphate is bound at residue 128-132 (ANGQA). Position 156 (Lys-156) interacts with xanthine.

This sequence belongs to the purine/pyrimidine phosphoribosyltransferase family. Xpt subfamily. In terms of assembly, homodimer.

The protein localises to the cytoplasm. The enzyme catalyses XMP + diphosphate = xanthine + 5-phospho-alpha-D-ribose 1-diphosphate. The protein operates within purine metabolism; XMP biosynthesis via salvage pathway; XMP from xanthine: step 1/1. Its function is as follows. Converts the preformed base xanthine, a product of nucleic acid breakdown, to xanthosine 5'-monophosphate (XMP), so it can be reused for RNA or DNA synthesis. The protein is Xanthine phosphoribosyltransferase of Streptococcus pyogenes serotype M49 (strain NZ131).